The sequence spans 176 residues: Nucleoside triphosphate/diphosphate phosphatase (176 aa).

Arg-23 functions as the Proton donor in the catalytic mechanism. The Mg(2+) site is built by Asn-87, Asp-103, Asp-105, Asp-107, Asp-120, and Glu-123.

Belongs to the Ntdp family. Mg(2+) serves as cofactor.

The enzyme catalyses a ribonucleoside 5'-triphosphate + H2O = a ribonucleoside 5'-diphosphate + phosphate + H(+). It catalyses the reaction a ribonucleoside 5'-diphosphate + H2O = a ribonucleoside 5'-phosphate + phosphate + H(+). Its function is as follows. Has nucleoside phosphatase activity towards nucleoside triphosphates and nucleoside diphosphates. This Bacillus mycoides (strain KBAB4) (Bacillus weihenstephanensis) protein is Nucleoside triphosphate/diphosphate phosphatase.